Consider the following 406-residue polypeptide: Methylthioribose-1-phosphate isomerase (406 aa).

Catalysis depends on Asp-277, which acts as the Proton donor.

Belongs to the eIF-2B alpha/beta/delta subunits family. MtnA subfamily.

The protein localises to the cytoplasm. It is found in the nucleus. It carries out the reaction 5-(methylsulfanyl)-alpha-D-ribose 1-phosphate = 5-(methylsulfanyl)-D-ribulose 1-phosphate. Its pathway is amino-acid biosynthesis; L-methionine biosynthesis via salvage pathway; L-methionine from S-methyl-5-thio-alpha-D-ribose 1-phosphate: step 1/6. Catalyzes the interconversion of methylthioribose-1-phosphate (MTR-1-P) into methylthioribulose-1-phosphate (MTRu-1-P). This chain is Methylthioribose-1-phosphate isomerase, found in Debaryomyces hansenii (strain ATCC 36239 / CBS 767 / BCRC 21394 / JCM 1990 / NBRC 0083 / IGC 2968) (Yeast).